We begin with the raw amino-acid sequence, 191 residues long: Cytochrome c oxidase assembly protein CtaG (191 aa).

The Cytoplasmic portion of the chain corresponds to 1–9 (MSLSPHQKT). The chain crosses the membrane as a helical; Signal-anchor for type II membrane protein span at residues 10–30 (AGGLVLVVAVMGAASFAAVPF). Residues 31–191 (YNWFCRVTGF…LAAESATDVN (161 aa)) lie on the Periplasmic side of the membrane.

It belongs to the COX11/CtaG family.

It is found in the cell inner membrane. In terms of biological role, exerts its effect at some terminal stage of cytochrome c oxidase synthesis, probably by being involved in the insertion of the copper B into subunit I. The polypeptide is Cytochrome c oxidase assembly protein CtaG (Cereibacter sphaeroides (strain ATCC 17023 / DSM 158 / JCM 6121 / CCUG 31486 / LMG 2827 / NBRC 12203 / NCIMB 8253 / ATH 2.4.1.) (Rhodobacter sphaeroides)).